A 201-amino-acid polypeptide reads, in one-letter code: Sterile alpha motif domain-containing protein 12 (201 aa).

One can recognise an SAM domain in the interval 77–143; that stretch reads WTQQDVCKWL…LQQVLQLKVR (67 aa).

The protein is Sterile alpha motif domain-containing protein 12 (SAMD12) of Pongo abelii (Sumatran orangutan).